We begin with the raw amino-acid sequence, 420 residues long: Polyketide biosynthesis 3-hydroxy-3-methylglutaryl-ACP synthase PksG (420 aa).

Catalysis depends on Glu-82, which acts as the Proton donor/acceptor. Cys-114 (acyl-thioester intermediate) is an active-site residue. The active-site Proton donor/acceptor is His-250.

This sequence belongs to the thiolase-like superfamily. HMG-CoA synthase family.

The protein resides in the cytoplasm. The catalysed reaction is 3-oxobutanoyl-[ACP] + acetyl-[ACP] + H2O = (3S)-hydroxy-3-methylglutaryl-[ACP] + holo-[ACP] + H(+). Its pathway is antibiotic biosynthesis; bacillaene biosynthesis. Functionally, involved in some intermediate steps for the synthesis of the antibiotic polyketide bacillaene which is involved in secondary metabolism. It catalyzes the aldol condensation between the acetyl group attached to the acyl-carrier-protein AcpK (Ac-AcpK) and a beta-ketothioester polyketide intermediate linked to one of the consecutive thiolation domains of PksL. This is Polyketide biosynthesis 3-hydroxy-3-methylglutaryl-ACP synthase PksG (pksG) from Bacillus subtilis (strain 168).